The chain runs to 153 residues: 6,7-dimethyl-8-ribityllumazine synthase (153 aa).

5-amino-6-(D-ribitylamino)uracil-binding positions include F21, 55–57 (AFE), and 79–81 (TVI). 84-85 (AT) provides a ligand contact to (2S)-2-hydroxy-3-oxobutyl phosphate. H87 acts as the Proton donor in catalysis. Residue F112 participates in 5-amino-6-(D-ribitylamino)uracil binding. Position 126 (R126) interacts with (2S)-2-hydroxy-3-oxobutyl phosphate.

Belongs to the DMRL synthase family. In terms of assembly, forms an icosahedral capsid composed of 60 subunits, arranged as a dodecamer of pentamers.

The catalysed reaction is (2S)-2-hydroxy-3-oxobutyl phosphate + 5-amino-6-(D-ribitylamino)uracil = 6,7-dimethyl-8-(1-D-ribityl)lumazine + phosphate + 2 H2O + H(+). The protein operates within cofactor biosynthesis; riboflavin biosynthesis; riboflavin from 2-hydroxy-3-oxobutyl phosphate and 5-amino-6-(D-ribitylamino)uracil: step 1/2. Functionally, catalyzes the formation of 6,7-dimethyl-8-ribityllumazine by condensation of 5-amino-6-(D-ribitylamino)uracil with 3,4-dihydroxy-2-butanone 4-phosphate. This is the penultimate step in the biosynthesis of riboflavin. The chain is 6,7-dimethyl-8-ribityllumazine synthase from Bacillus cereus (strain AH187).